The chain runs to 180 residues: Virion protein US10 homolog (180 aa).

This sequence belongs to the herpesviridae US10 family. Phosphorylated.

It localises to the virion tegument. The protein localises to the host nucleus matrix. The sequence is that of Virion protein US10 homolog (64) from Varicella-zoster virus (strain Dumas) (HHV-3).